The sequence spans 177 residues: Large ribosomal subunit protein uL6 (177 aa).

The protein belongs to the universal ribosomal protein uL6 family. In terms of assembly, part of the 50S ribosomal subunit.

Its function is as follows. This protein binds to the 23S rRNA, and is important in its secondary structure. It is located near the subunit interface in the base of the L7/L12 stalk, and near the tRNA binding site of the peptidyltransferase center. In Rickettsia felis (strain ATCC VR-1525 / URRWXCal2) (Rickettsia azadi), this protein is Large ribosomal subunit protein uL6.